A 1347-amino-acid chain; its full sequence is Spermatogenesis-associated protein 31A7 (1347 aa).

Residues P23 to L43 traverse the membrane as a helical segment. Disordered stretches follow at residues P55–P88, G106–T233, Q374–K397, D628–K658, R900–V955, V1084–S1161, and K1313–H1335. The segment covering G60–R82 has biased composition (basic residues). Polar residues predominate over residues L165–V178. Residues P198 to P211 show a composition bias toward pro residues. Composition is skewed to polar residues over residues P631–E651 and L927–A948. 2 stretches are compositionally biased toward basic and acidic residues: residues H1108–G1127 and R1137–E1146.

This sequence belongs to the SPATA31 family.

The protein localises to the membrane. May play a role in spermatogenesis. The chain is Spermatogenesis-associated protein 31A7 from Homo sapiens (Human).